A 231-amino-acid polypeptide reads, in one-letter code: Orotate phosphoribosyltransferase (231 aa).

5-phospho-alpha-D-ribose 1-diphosphate is bound by residues K27, 79–80 (YK), R106, K107, K110, H112, and 133–141 (DDVMTAGTA). Positions 137 and 166 each coordinate orotate.

This sequence belongs to the purine/pyrimidine phosphoribosyltransferase family. PyrE subfamily. Homodimer. It depends on Mg(2+) as a cofactor.

It catalyses the reaction orotidine 5'-phosphate + diphosphate = orotate + 5-phospho-alpha-D-ribose 1-diphosphate. Its pathway is pyrimidine metabolism; UMP biosynthesis via de novo pathway; UMP from orotate: step 1/2. Catalyzes the transfer of a ribosyl phosphate group from 5-phosphoribose 1-diphosphate to orotate, leading to the formation of orotidine monophosphate (OMP). In Bifidobacterium adolescentis (strain ATCC 15703 / DSM 20083 / NCTC 11814 / E194a), this protein is Orotate phosphoribosyltransferase.